The following is a 455-amino-acid chain: DNA repair protein RadA (455 aa).

Residues 12 to 29 (CSECGSYSPKWLGQCPGC) form a C4-type zinc finger. Residue 95-102 (GEPGIGKS) coordinates ATP. The short motif at 252-256 (KNRFG) is the RadA KNRFG motif element. Residues 351-455 (DVFLSIAGGL…TIKDAVRLLQ (105 aa)) form a lon-protease-like region.

Belongs to the RecA family. RadA subfamily.

In terms of biological role, DNA-dependent ATPase involved in processing of recombination intermediates, plays a role in repairing DNA breaks. Stimulates the branch migration of RecA-mediated strand transfer reactions, allowing the 3' invading strand to extend heteroduplex DNA faster. Binds ssDNA in the presence of ADP but not other nucleotides, has ATPase activity that is stimulated by ssDNA and various branched DNA structures, but inhibited by SSB. Does not have RecA's homology-searching function. This chain is DNA repair protein RadA, found in Chlamydia muridarum (strain MoPn / Nigg).